The chain runs to 362 residues: MGNHTWEGCHVDSRVDHLFPPSLYIFVIGVGLPTNCLALWAAYRQVQQRNELGVYLMNLSIADLLYICTLPLWVDYFLHHDNWIHGPGSCKLFGFIFYTNIYISIAFLCCISVDRYLAVAHPLRFARLRRVKTAVAVSSVVWATELGANSAPLFHDELFRDRYNHTFCFEKFPMEGWVAWMNLYRVFVGFLFPWALMLLSYRGILRAVRGSVSTERQEKAKIKRLALSLIAIVLVCFAPYHVLLLSRSAIYLGRPWDCGFEERVFSAYHSSLAFTSLNCVADPILYCLVNEGARSDVAKALHNLLRFLASDKPQEMANASLTLETPLTSKRNSTAKAMTGSWAATPPSQGDQVQLKMLPPAQ.

Residues 1–8 (MGNHTWEG) lie on the Extracellular side of the membrane. N-linked (GlcNAc...) asparagine glycosylation is present at N3. Residues 9–45 (CHVDSRVDHLFPPSLYIFVIGVGLPTNCLALWAAYRQ) form a helical membrane-spanning segment. 2 disulfide bridges follow: C9–C258 and C90–C168. The Cytoplasmic portion of the chain corresponds to 46–49 (VQQR). The helical transmembrane segment at 50–80 (NELGVYLMNLSIADLLYICTLPLWVDYFLHH) threads the bilayer. Residues 81 to 85 (DNWIH) lie on the Extracellular side of the membrane. The chain crosses the membrane as a helical span at residues 86–121 (GPGSCKLFGFIFYTNIYISIAFLCCISVDRYLAVAH). Residues 122 to 129 (PLRFARLR) lie on the Cytoplasmic side of the membrane. Residues 130-156 (RVKTAVAVSSVVWATELGANSAPLFHD) traverse the membrane as a helical segment. Topologically, residues 157 to 172 (ELFRDRYNHTFCFEKF) are extracellular. Positions 157–172 (ELFRDRYNHTFCFEKF) are extracellular loop 2 (ECL2). The N-linked (GlcNAc...) asparagine glycan is linked to N164. The helical transmembrane segment at 173–210 (PMEGWVAWMNLYRVFVGFLFPWALMLLSYRGILRAVRG) threads the bilayer. Topologically, residues 211–214 (SVST) are cytoplasmic. Residues 215–250 (ERQEKAKIKRLALSLIAIVLVCFAPYHVLLLSRSAI) form a helical membrane-spanning segment. Residues 251-260 (YLGRPWDCGF) lie on the Extracellular side of the membrane. Residues 261 to 289 (EERVFSAYHSSLAFTSLNCVADPILYCLV) traverse the membrane as a helical segment. Over 290-362 (NEGARSDVAK…VQLKMLPPAQ (73 aa)) the chain is Cytoplasmic. The disordered stretch occupies residues 335-362 (AKAMTGSWAATPPSQGDQVQLKMLPPAQ).

This sequence belongs to the G-protein coupled receptor 1 family.

The protein resides in the cell membrane. Its activity is regulated as follows. Activated by a network of residues that connects an extracellular-facing cavity to Glu-145, a conserved charged residue buried in the transmembrane core of the receptor. Protonation likely drives conformational changes in extracellular loop 2 (ECL2), which stabilizes movement of transmembrane 3 (TM3) and a series of rearrangements that connect the extracellular-facing cavity to Glu-145, a residue only conserved in proton-sensing G-protein coupled receptors. Proton-sensing G-protein coupled receptor activated by extracellular pH, which is required to monitor pH changes and generate adaptive reactions. Activated by an optimal pH of 6.8-7.2. Ligand binding causes a conformation change that triggers signaling via guanine nucleotide-binding proteins (G proteins) and modulates the activity of downstream effectors, such as adenylate cyclase. GPR4 is mainly coupled to G(s) G proteins and mediates activation of adenylate cyclase activity. May also couple with G(q) and G(12)/G(13) G proteins. Acts as a key regulator of respiratory sensitivity to CO2/H(+) in brain retrotrapezoid nucleus neurons: acts by mediating detection of protons generated by the formation of carbonic acid in the blood, an important mechanism to impulse to breathe. Also acts as a regulator of acid secretion in the kidney collecting duct by maintaining acid-base homeostasis in the kidney. Acidosis-induced GPR4 activation increases paracellular gap formation and permeability of vascular endothelial cells, possibly through the G(12)/G(13)/Rho GTPase signaling pathway. This is G-prodeshotein coupled receptor 4 from Homo sapiens (Human).